The following is a 409-amino-acid chain: Ubiquitin-associated domain-containing protein 1 (409 aa).

Met-1 carries the post-translational modification N-acetylmethionine. One can recognise a Ubiquitin-like domain in the interval 14 to 98 (LRLHICAADG…LLLIKKRAPS (85 aa)). The UBA 1 domain occupies 187-231 (DEDERVDETALRQLTEMGFPESRASKALRLNHMSVPQAMEWLIEH). A disordered region spans residues 235–273 (PAIDTPLPGHAAQAEASAAAATSSSSSEAAVGTSVEDEE). Residues 245-264 (AAQAEASAAAATSSSSSEAA) are compositionally biased toward low complexity. The 41-residue stretch at 292-332 (RADARAVISLMEMGFDEKEVIDALRVNNNQQNAACEWLLGD) folds into the UBA 2 domain. Residues 357–396 (NPVVQLGLTNPKTLLAFEDMLENPLNSTQWMNDPETGPVM) form the STI1 domain.

Component of the KPC complex composed of RNF123/KPC1 and UBAC1/KPC2. Interacts (via ubiquitin-like domain) with RNF123. Interacts (via ubiquitin-like and UBA domains) with the proteasome via its N-terminal domain.

It localises to the cytoplasm. It participates in protein modification; protein ubiquitination. Functionally, non-catalytic component of the KPC complex, a E3 ubiquitin-protein ligase complex that mediates polyubiquitination of target proteins, such as CDKN1B and NFKB1. The KPC complex catalyzes polyubiquitination and proteasome-mediated degradation of CDKN1B during G1 phase of the cell cycle. The KPC complex also acts as a key regulator of the NF-kappa-B signaling by promoting maturation of the NFKB1 component of NF-kappa-B by catalyzing ubiquitination of the NFKB1 p105 precursor. Within the KPC complex, UBAC1 acts as an adapter that promotes the transfer of target proteins that have been polyubiquitinated by RNF123/KPC1 to the 26S proteasome. This chain is Ubiquitin-associated domain-containing protein 1 (Ubac1), found in Rattus norvegicus (Rat).